Consider the following 246-residue polypeptide: Putative carboxymethylenebutenolidase (246 aa).

Residues C127, D183, and H215 contribute to the active site.

It belongs to the dienelactone hydrolase family.

It carries out the reaction 2-(5-oxo-2,5-dihydrofuran-2-ylidene)acetate + H2O = 4-oxohex-2-enedioate + H(+). The polypeptide is Putative carboxymethylenebutenolidase (Synechocystis sp. (strain ATCC 27184 / PCC 6803 / Kazusa)).